A 140-amino-acid chain; its full sequence is Large ribosomal subunit protein uL22c (140 aa).

This sequence belongs to the universal ribosomal protein uL22 family. Part of the 50S ribosomal subunit.

The protein resides in the plastid. The protein localises to the chloroplast. Its function is as follows. This protein binds specifically to 23S rRNA. The globular domain of the protein is located near the polypeptide exit tunnel on the outside of the subunit, while an extended beta-hairpin is found that lines the wall of the exit tunnel in the center of the 70S ribosome. The protein is Large ribosomal subunit protein uL22c (rpl22) of Calycanthus floridus var. glaucus (Eastern sweetshrub).